Consider the following 198-residue polypeptide: Segregation and condensation protein B (198 aa).

The disordered stretch occupies residues 168-198 (KLADPATDEPDQNEMDLFFDRFNQSKEQEEE).

The protein belongs to the ScpB family. As to quaternary structure, homodimer. Homodimerization may be required to stabilize the binding of ScpA to the Smc head domains. Component of a cohesin-like complex composed of ScpA, ScpB and the Smc homodimer, in which ScpA and ScpB bind to the head domain of Smc. The presence of the three proteins is required for the association of the complex with DNA.

The protein localises to the cytoplasm. Participates in chromosomal partition during cell division. May act via the formation of a condensin-like complex containing Smc and ScpA that pull DNA away from mid-cell into both cell halves. This Listeria monocytogenes serotype 4b (strain CLIP80459) protein is Segregation and condensation protein B.